The following is a 1322-amino-acid chain: C-Jun-amino-terminal kinase-interacting protein 3 (1322 aa).

The region spanning 12-100 (VVVYQDDYCS…LTQYEREKAL (89 aa)) is the RH1 domain. A kinesin-binding domain (KBD); essential for its function in axon elongation region spans residues 50 to 80 (EVVKELMPLVVNVLENLDSVLSENQEHEVEL). The stretch at 66-167 (LDSVLSENQE…KKEYNALHQR (102 aa)) forms a coiled coil. Disordered regions lie at residues 183 to 211 (KMQQVGGGGQTESSLPGRSRKERPTSLNV) and 245 to 317 (SSSY…NSRN). The JNK-binding domain (JBD); essential for its function in axon elongation stretch occupies residues 210–226 (NVFPLADGMVRAQMGGK). A compositionally biased stretch (low complexity) spans 261–270 (SSAAATPSTT). Thr-266, Thr-276, and Thr-287 each carry phosphothreonine. Residues 271–282 (GTKSNTPTSSVP) show a composition bias toward polar residues. Residues 305–315 (NNKRAREKRNS) are compositionally biased toward basic residues. 3 positions are modified to phosphoserine: Ser-315, Ser-365, and Ser-366. Residues 424 to 459 (QLLETKNALNVVKNDLIAKVDQLSGEQEVLKGELEA) are leucine zipper-like domain (LZ); essential for its function in axon elongation. Residues 443–534 (VDQLSGEQEV…KERLMELQEA (92 aa)) adopt a coiled-coil conformation. The tract at residues 459 to 515 (AAKQAKVKLENRIKELEEELKRVKSEAVTARREPREEVEDDKIPMAQRRRFTRVEMA) is interaction with NTRK2. One can recognise an RH2 domain in the interval 506 to 580 (RRRFTRVEMA…SPPPAKRSYP (75 aa)). 2 positions are modified to phosphoserine: Ser-588 and Ser-662. Disordered stretches follow at residues 704–754 (WKPN…EADA), 844–952 (PRSN…TTSS), and 1281–1307 (RIGDGEDDETEEGTGDVNQTKPSLSKA). Positions 724–750 (LTCDREGEGEPKSTHPSPEKKKAKEVP) are enriched in basic and acidic residues. The span at 914–937 (APTQSSSTQPASENGSESDGSIVQ) shows a compositional bias: polar residues. The segment covering 941-952 (EPSGESSATTSS) has biased composition (low complexity). The segment covering 1285–1294 (GEDDETEEGT) has biased composition (acidic residues).

This sequence belongs to the JIP scaffold family. Forms homo- or heterooligomeric complexes. The central region of MAPK8IP3 interacts with the C-terminal of MAPK8IP2 but not MAPK8IP1. Binds specific components of the JNK signaling pathway namely MAPK8/JNK1, MAPK9/JNK2 and MAPK10/JNK3 to the N-terminal region, MAP2K4/MKK4 and MAP2K7/MKK7 to the central region and MAP3K11 to the C-terminal region. Binds the TPR motif-containing C-terminal of kinesin light chain, KLC1. Pre-assembled MAPK8IP1 scaffolding complexes are then transported as a cargo of kinesin, to the required subcellular location. Interacts with ROCK1 and this interaction is enhanced by ultraviolet-B (UVB) radiation. Interacts with SH3RF2. Interacts with NTRK3/TRKC. Interacts with NTRK2/TRKB. In terms of processing, phosphorylation by ROCK1 is crucial for the recruitment of JNK.

The protein resides in the cytoplasm. It is found in the golgi apparatus. Its subcellular location is the cytoplasmic vesicle. It localises to the cell projection. The protein localises to the growth cone. The protein resides in the axon. It is found in the dendrite. Its subcellular location is the perinuclear region. The JNK-interacting protein (JIP) group of scaffold proteins selectively mediates JNK signaling by aggregating specific components of the MAPK cascade to form a functional JNK signaling module. May function as a regulator of vesicle transport, through interactions with the JNK-signaling components and motor proteins. Promotes neuronal axon elongation in a kinesin- and JNK-dependent manner. Activates cofilin at axon tips via local activation of JNK, thereby regulating filopodial dynamics and enhancing axon elongation. Its binding to kinesin heavy chains (KHC), promotes kinesin-1 motility along microtubules and is essential for axon elongation and regeneration. Regulates cortical neuronal migration by mediating NTRK2/TRKB anterograde axonal transport during brain development. Acts as an adapter that bridges the interaction between NTRK2/TRKB and KLC1 and drives NTRK2/TRKB axonal but not dendritic anterograde transport, which is essential for subsequent BDNF-triggered signaling and filopodia formation. The sequence is that of C-Jun-amino-terminal kinase-interacting protein 3 (Mapk8ip3) from Rattus norvegicus (Rat).